The sequence spans 426 residues: Tol-Pal system protein TolB (426 aa).

The first 24 residues, 1–24, serve as a signal peptide directing secretion; it reads MKLKSRFTSIIGVITLFFSQTVTA.

The protein belongs to the TolB family. In terms of assembly, the Tol-Pal system is composed of five core proteins: the inner membrane proteins TolA, TolQ and TolR, the periplasmic protein TolB and the outer membrane protein Pal. They form a network linking the inner and outer membranes and the peptidoglycan layer.

The protein resides in the periplasm. Functionally, part of the Tol-Pal system, which plays a role in outer membrane invagination during cell division and is important for maintaining outer membrane integrity. This is Tol-Pal system protein TolB from Actinobacillus pleuropneumoniae serotype 3 (strain JL03).